The following is an 83-amino-acid chain: Exodeoxyribonuclease 7 small subunit (83 aa).

It belongs to the XseB family. Heterooligomer composed of large and small subunits.

The protein resides in the cytoplasm. It catalyses the reaction Exonucleolytic cleavage in either 5'- to 3'- or 3'- to 5'-direction to yield nucleoside 5'-phosphates.. Bidirectionally degrades single-stranded DNA into large acid-insoluble oligonucleotides, which are then degraded further into small acid-soluble oligonucleotides. The sequence is that of Exodeoxyribonuclease 7 small subunit from Rhizobium etli (strain ATCC 51251 / DSM 11541 / JCM 21823 / NBRC 15573 / CFN 42).